We begin with the raw amino-acid sequence, 449 residues long: Amidophosphoribosyltransferase (449 aa).

Positions 1–9 (MRGEIMKEK) are excised as a propeptide. Catalysis depends on Cys-10, which acts as the Nucleophile. The 215-residue stretch at 10–224 (CGIFGAYSQD…PGEVIVVKDG (215 aa)) folds into the Glutamine amidotransferase type-2 domain. Residue Cys-239 coordinates [4Fe-4S] cluster. Ser-286, Asp-346, and Asp-347 together coordinate Mg(2+). [4Fe-4S] cluster-binding residues include Cys-383, Cys-432, and Cys-435.

The protein in the C-terminal section; belongs to the purine/pyrimidine phosphoribosyltransferase family. Requires Mg(2+) as cofactor. [4Fe-4S] cluster serves as cofactor.

The enzyme catalyses 5-phospho-beta-D-ribosylamine + L-glutamate + diphosphate = 5-phospho-alpha-D-ribose 1-diphosphate + L-glutamine + H2O. It functions in the pathway purine metabolism; IMP biosynthesis via de novo pathway; N(1)-(5-phospho-D-ribosyl)glycinamide from 5-phospho-alpha-D-ribose 1-diphosphate: step 1/2. Its function is as follows. Catalyzes the formation of phosphoribosylamine from phosphoribosylpyrophosphate (PRPP) and glutamine. This is Amidophosphoribosyltransferase from Pyrococcus horikoshii (strain ATCC 700860 / DSM 12428 / JCM 9974 / NBRC 100139 / OT-3).